A 511-amino-acid chain; its full sequence is NAD(P)H-quinone oxidoreductase subunit 2, chloroplastic (511 aa).

The next 14 membrane-spanning stretches (helical) occupy residues 15 to 35 (LLPE…DLTF), 39 to 59 (VLSW…VVLL), 78 to 98 (SLSI…ILLS), 108 to 128 (ALTE…LLSG), 132 to 152 (LIMI…LTGY), 167 to 187 (LLIG…LYGL), 210 to 230 (FASW…VAAA), 244 to 264 (PTPV…ALAT), 278 to 298 (WHLL…LIAI), 306 to 326 (MLGY…IAGN), 334 to 354 (LVYM…IILF), 377 to 397 (VFCF…AGFF), 410 to 430 (GFYI…YYYL), and 466 to 486 (LGIG…NPII).

The protein belongs to the complex I subunit 2 family. NDH is composed of at least 16 different subunits, 5 of which are encoded in the nucleus.

The protein resides in the plastid. It is found in the chloroplast thylakoid membrane. It catalyses the reaction a plastoquinone + NADH + (n+1) H(+)(in) = a plastoquinol + NAD(+) + n H(+)(out). The enzyme catalyses a plastoquinone + NADPH + (n+1) H(+)(in) = a plastoquinol + NADP(+) + n H(+)(out). Functionally, NDH shuttles electrons from NAD(P)H:plastoquinone, via FMN and iron-sulfur (Fe-S) centers, to quinones in the photosynthetic chain and possibly in a chloroplast respiratory chain. The immediate electron acceptor for the enzyme in this species is believed to be plastoquinone. Couples the redox reaction to proton translocation, and thus conserves the redox energy in a proton gradient. The sequence is that of NAD(P)H-quinone oxidoreductase subunit 2, chloroplastic from Chlorokybus atmophyticus (Soil alga).